Consider the following 257-residue polypeptide: UPF0246 protein YaaA (257 aa).

Belongs to the UPF0246 family.

The chain is UPF0246 protein YaaA from Salmonella choleraesuis (strain SC-B67).